A 49-amino-acid chain; its full sequence is Putative metallothionein MT1DP (49 aa).

Residues 1–29 (MDLSCSCATGGSCTCASSCKCKEYKCTSC) are beta. A divalent metal cation-binding residues include C5, C7, C13, C15, C19, C21, C26, C29, C33, C34, C36, C37, C41, C44, and C48. The segment at 30 to 49 (KKNCCSCCPMGCAKCAQGCT) is alpha.

It belongs to the metallothionein superfamily. Type 1 family.

Its function is as follows. Metallothioneins have a high content of cysteine residues that bind various heavy metals. The protein is Putative metallothionein MT1DP (MT1DP) of Homo sapiens (Human).